A 171-amino-acid chain; its full sequence is MPLLDSFTVDHTIMKAPAVRVAKTMKTPHGDEITVFDLRFCVPNKEVMPEKGIHTLEHLFAGFMRDHLNGDGVEIIDISPMGCRTGFYMSLIGTPDEQRVADAWKAAMADVLKVTDQRKIPELNEYQCGTYHMHSLEEAQSIAKDILDRDVRINHNEELALPKEKLTELHI.

His-54, His-58, and Cys-128 together coordinate Fe cation.

The protein belongs to the LuxS family. In terms of assembly, homodimer. It depends on Fe cation as a cofactor.

It catalyses the reaction S-(5-deoxy-D-ribos-5-yl)-L-homocysteine = (S)-4,5-dihydroxypentane-2,3-dione + L-homocysteine. Involved in the synthesis of autoinducer 2 (AI-2) which is secreted by bacteria and is used to communicate both the cell density and the metabolic potential of the environment. The regulation of gene expression in response to changes in cell density is called quorum sensing. Catalyzes the transformation of S-ribosylhomocysteine (RHC) to homocysteine (HC) and 4,5-dihydroxy-2,3-pentadione (DPD). The chain is S-ribosylhomocysteine lyase from Yersinia pseudotuberculosis serotype O:1b (strain IP 31758).